Consider the following 126-residue polypeptide: Desulfoferrodoxin (126 aa).

Fe cation is bound by residues Cys-10, Cys-13, Cys-29, Cys-30, His-49, His-69, His-75, Cys-116, and His-119.

Belongs to the desulfoferrodoxin family. In terms of assembly, homodimer. Fe(3+) is required as a cofactor. Cu(2+) serves as cofactor.

It catalyses the reaction reduced [rubredoxin] + superoxide + 2 H(+) = oxidized [rubredoxin] + H2O2. Catalyzes the one-electron reduction of superoxide anion radical to hydrogen peroxide at a nonheme ferrous iron center. Plays a fundamental role in case of oxidative stress via its superoxide detoxification activity. This Nitratidesulfovibrio vulgaris (strain ATCC 29579 / DSM 644 / CCUG 34227 / NCIMB 8303 / VKM B-1760 / Hildenborough) (Desulfovibrio vulgaris) protein is Desulfoferrodoxin (dfx).